The sequence spans 420 residues: Tubulin epsilon and delta complex protein 1 (420 aa).

Residues 276 to 340 are a coiled coil; that stretch reads SEGGLGELES…AVQQELAALQ (65 aa). The segment covering 342-351 has biased composition (polar residues); sequence SWEQSSTPGQ. Residues 342–369 form a disordered region; sequence SWEQSSTPGQPQRPHRLVRSKDGAPRPQ. Positions 377–409 form a coiled coil; the sequence is IRTLSAKEACLKKALHQLQRQCQQELARLAGAL.

In terms of assembly, interacts with TEDC2. Found in a complex with TEDC1, TEDC2, TUBE1 and TUBD1.

It is found in the cell projection. The protein localises to the cilium. The protein resides in the cytoplasm. Its subcellular location is the cytoskeleton. It localises to the microtubule organizing center. It is found in the centrosome. The protein localises to the centriole. Acts as a positive regulator of ciliary hedgehog signaling. Required for centriole stability. May play a role in counteracting perturbation of actin filaments, such as after treatment with the actin depolymerizing microbial metabolite Chivosazole F. The chain is Tubulin epsilon and delta complex protein 1 from Mus musculus (Mouse).